A 155-amino-acid chain; its full sequence is 6,7-dimethyl-8-ribityllumazine synthase (155 aa).

5-amino-6-(D-ribitylamino)uracil contacts are provided by residues Phe-23, 57 to 59, and 80 to 82; these read AFE and AVI. (2S)-2-hydroxy-3-oxobutyl phosphate is bound at residue 85-86; sequence AT. The Proton donor role is filled by His-88. A 5-amino-6-(D-ribitylamino)uracil-binding site is contributed by Tyr-113. Residue Arg-127 coordinates (2S)-2-hydroxy-3-oxobutyl phosphate.

It belongs to the DMRL synthase family.

The enzyme catalyses (2S)-2-hydroxy-3-oxobutyl phosphate + 5-amino-6-(D-ribitylamino)uracil = 6,7-dimethyl-8-(1-D-ribityl)lumazine + phosphate + 2 H2O + H(+). It participates in cofactor biosynthesis; riboflavin biosynthesis; riboflavin from 2-hydroxy-3-oxobutyl phosphate and 5-amino-6-(D-ribitylamino)uracil: step 1/2. Catalyzes the formation of 6,7-dimethyl-8-ribityllumazine by condensation of 5-amino-6-(D-ribitylamino)uracil with 3,4-dihydroxy-2-butanone 4-phosphate. This is the penultimate step in the biosynthesis of riboflavin. The chain is 6,7-dimethyl-8-ribityllumazine synthase from Moorella thermoacetica (strain ATCC 39073 / JCM 9320).